A 235-amino-acid chain; its full sequence is Zein-alpha PMS1 (235 aa).

A signal peptide spans 1–21 (MAAKIFCLLMLLGLSASAATA).

The protein belongs to the zein family.

Its function is as follows. Zeins are major seed storage proteins. The polypeptide is Zein-alpha PMS1 (ZMPMS1) (Zea mays (Maize)).